Consider the following 284-residue polypeptide: UDP-N-acetylenolpyruvoylglucosamine reductase (284 aa).

The region spanning 21–180 (KIGGPARLFV…LKAAFKLKKA (160 aa)) is the FAD-binding PCMH-type domain. Arg-159 is a catalytic residue. Residue Ser-209 is the Proton donor of the active site. The active site involves Glu-280.

The protein belongs to the MurB family. FAD serves as cofactor.

Its subcellular location is the cytoplasm. The catalysed reaction is UDP-N-acetyl-alpha-D-muramate + NADP(+) = UDP-N-acetyl-3-O-(1-carboxyvinyl)-alpha-D-glucosamine + NADPH + H(+). The protein operates within cell wall biogenesis; peptidoglycan biosynthesis. Its function is as follows. Cell wall formation. This chain is UDP-N-acetylenolpyruvoylglucosamine reductase, found in Pseudothermotoga lettingae (strain ATCC BAA-301 / DSM 14385 / NBRC 107922 / TMO) (Thermotoga lettingae).